Reading from the N-terminus, the 239-residue chain is Purine nucleoside phosphorylase DeoD-type (239 aa).

A purine D-ribonucleoside is bound at residue His-5. Phosphate is bound by residues Gly-21, Arg-25, Arg-44, and Arg-88–Ser-91. A purine D-ribonucleoside-binding positions include Glu-180 to Glu-182 and Ser-204 to Asp-205. Residue Asp-205 is the Proton donor of the active site.

It belongs to the PNP/UDP phosphorylase family. In terms of assembly, homohexamer; trimer of homodimers.

The enzyme catalyses a purine D-ribonucleoside + phosphate = a purine nucleobase + alpha-D-ribose 1-phosphate. The catalysed reaction is a purine 2'-deoxy-D-ribonucleoside + phosphate = a purine nucleobase + 2-deoxy-alpha-D-ribose 1-phosphate. Catalyzes the reversible phosphorolytic breakdown of the N-glycosidic bond in the beta-(deoxy)ribonucleoside molecules, with the formation of the corresponding free purine bases and pentose-1-phosphate. This chain is Purine nucleoside phosphorylase DeoD-type, found in Pectobacterium atrosepticum (strain SCRI 1043 / ATCC BAA-672) (Erwinia carotovora subsp. atroseptica).